Reading from the N-terminus, the 348-residue chain is Protein RecA (348 aa).

66 to 73 (GPESSGKT) contacts ATP.

It belongs to the RecA family.

It localises to the cytoplasm. Functionally, can catalyze the hydrolysis of ATP in the presence of single-stranded DNA, the ATP-dependent uptake of single-stranded DNA by duplex DNA, and the ATP-dependent hybridization of homologous single-stranded DNAs. It interacts with LexA causing its activation and leading to its autocatalytic cleavage. The polypeptide is Protein RecA (Legionella pneumophila (strain Paris)).